We begin with the raw amino-acid sequence, 66 residues long: Large ribosomal subunit protein bL35 (66 aa).

A disordered region spans residues 1 to 26 (MPKQKTHRGAAKRFKKTGSGKLKRSH).

Belongs to the bacterial ribosomal protein bL35 family.

The protein is Large ribosomal subunit protein bL35 of Bacillus anthracis.